The chain runs to 29 residues: NYTIGNDNVLTEPLSEIKTAGLMYKMGVQ.

It is found in the periplasm. It carries out the reaction diphosphate + H2O = 2 phosphate + H(+). Functionally, inorganic pyrophosphatase is an essential enzyme for the activation of sulfate by sulfate reducing bacteria. This is a high activity pyrophosphatase. In Nitratidesulfovibrio vulgaris (strain ATCC 29579 / DSM 644 / CCUG 34227 / NCIMB 8303 / VKM B-1760 / Hildenborough) (Desulfovibrio vulgaris), this protein is Inorganic pyrophosphatase.